The chain runs to 299 residues: Tyrosine recombinase XerC (299 aa).

The region spanning 1 to 85 (MQADLDAFLD…ALRGFYRYLL (85 aa)) is the Core-binding (CB) domain. One can recognise a Tyr recombinase domain in the interval 106–285 (RLPRTLDADR…DFQHLAAVYD (180 aa)). Active-site residues include Arg146, Lys170, His237, Arg240, and His263. Tyr272 serves as the catalytic O-(3'-phospho-DNA)-tyrosine intermediate.

The protein belongs to the 'phage' integrase family. XerC subfamily. Forms a cyclic heterotetrameric complex composed of two molecules of XerC and two molecules of XerD.

It is found in the cytoplasm. Functionally, site-specific tyrosine recombinase, which acts by catalyzing the cutting and rejoining of the recombining DNA molecules. The XerC-XerD complex is essential to convert dimers of the bacterial chromosome into monomers to permit their segregation at cell division. It also contributes to the segregational stability of plasmids. This is Tyrosine recombinase XerC from Azotobacter vinelandii (strain DJ / ATCC BAA-1303).